Consider the following 237-residue polypeptide: Cysteine-rich venom protein DIS2 (237 aa).

Residues 1-18 (MFVFILLSLAAVLQQSFG) form the signal peptide. Residues 37–165 (VDKHNAFRRS…SYNYFYVCQY (129 aa)) form the SCP domain. Intrachain disulfides connect Cys74-Cys152, Cys91-Cys166, Cys147-Cys163, Cys185-Cys192, Cys188-Cys197, Cys201-Cys234, and Cys219-Cys232. In terms of domain architecture, ShKT spans 201 to 234 (CSREDVFMNCKSLVAQSNCQDDYIRKNCPATCFC).

Belongs to the CRISP family. As to expression, expressed by the venom gland.

The protein resides in the secreted. In terms of biological role, weakly blocks contraction of smooth muscle elicited by high potassium-induced depolarization, but does not block caffeine-stimulated contraction. May target voltage-gated calcium channels on smooth muscle. The protein is Cysteine-rich venom protein DIS2 of Dispholidus typus (Boomslang).